The chain runs to 728 residues: Myb-related protein A (728 aa).

The interval 1–31 is disordered; sequence MAGRARSEDEEEDGQFTEHDYDVSLQKGPKK. HTH myb-type domains follow at residues 30–80, 81–136, and 137–187; these read KKPW…HKVL, SPEL…NPDV, and KKSS…KRKV. DNA-binding regions (H-T-H motif) lie at residues 57 to 80, 109 to 132, and 160 to 183; these read WGVV…HKVL, WSII…HNHL, and WAEI…NSTM. Positions 230-293 are transcriptional activation domain; that stretch reads IPRYSSLSHD…RKRVPSGSSL (64 aa). Residues 296–534 are negative regulatory domain; sequence SESYHMGESM…IRRSLMAVTP (239 aa).

As to quaternary structure, component of the DREAM complex.

It is found in the nucleus. Its function is as follows. Transcription factor that specifically recognizes the sequence 5'-YAAC[GT]G-3'. Acts as a master regulator of male meiosis by promoting expression of piRNAs. The piRNA metabolic process mediates the repression of transposable elements during meiosis by forming complexes composed of piRNAs and Piwi proteins and governs the methylation and subsequent repression of transposons, which is essential for the germline integrity. The sequence is that of Myb-related protein A (mybl1) from Xenopus laevis (African clawed frog).